The chain runs to 617 residues: uncharacterized protein (617 aa).

Residues 10–30 (AFFFFFVSLILLFLSPSYSDV) form a helical membrane-spanning segment. Positions 34–58 (ESDPIPYENSDASPGVVTSSESDRQ) are disordered. Residues 43–53 (SDASPGVVTSS) are compositionally biased toward polar residues. Residues 60–86 (VSLHRLEELVRNLTELVARLDAKLSET) are a coiled coil. Residues 473–493 (MLWSSPVFFFILFLFGAWHFF) form a helical membrane-spanning segment. Residues 511–529 (STTMSSSSTTTAQNSSAFS) are compositionally biased toward low complexity. A disordered region spans residues 511 to 617 (STTMSSSSTT…GNNKALDDES (107 aa)). A compositionally biased stretch (basic and acidic residues) spans 531-543 (STRRNDDHMDLRR). The segment covering 563–584 (VGSNDPSSRAPVETTNYRTTAQ) has biased composition (polar residues). Residues 590–599 (GGSGLDSGGF) show a composition bias toward gly residues.

It is found in the membrane. This is an uncharacterized protein from Arabidopsis thaliana (Mouse-ear cress).